A 146-amino-acid chain; its full sequence is 1,4-dihydroxy-2-naphthoyl-CoA hydrolase (146 aa).

The active site involves aspartate 19.

Belongs to the 4-hydroxybenzoyl-CoA thioesterase family. DHNA-CoA hydrolase subfamily.

The enzyme catalyses 1,4-dihydroxy-2-naphthoyl-CoA + H2O = 1,4-dihydroxy-2-naphthoate + CoA + H(+). It participates in cofactor biosynthesis; phylloquinone biosynthesis. Its pathway is quinol/quinone metabolism; 1,4-dihydroxy-2-naphthoate biosynthesis; 1,4-dihydroxy-2-naphthoate from chorismate: step 7/7. Functionally, catalyzes the hydrolysis of 1,4-dihydroxy-2-naphthoyl-CoA (DHNA-CoA) to 1,4-dihydroxy-2-naphthoate (DHNA), a reaction involved in phylloquinone (vitamin K1) biosynthesis. In Thermosynechococcus vestitus (strain NIES-2133 / IAM M-273 / BP-1), this protein is 1,4-dihydroxy-2-naphthoyl-CoA hydrolase.